The sequence spans 392 residues: L-rhamnonate dehydratase (392 aa).

His-22 and Arg-48 together coordinate substrate. The Mg(2+) site is built by Asp-214, Glu-240, and Glu-268. His-318 acts as the Proton acceptor in catalysis. Glu-338 contacts substrate.

Belongs to the mandelate racemase/muconate lactonizing enzyme family. RhamD subfamily. As to quaternary structure, homooctamer; tetramer of dimers. Requires Mg(2+) as cofactor.

The catalysed reaction is L-rhamnonate = 2-dehydro-3-deoxy-L-rhamnonate + H2O. Functionally, catalyzes the dehydration of L-rhamnonate to 2-keto-3-deoxy-L-rhamnonate (KDR). This Burkholderia orbicola (strain MC0-3) protein is L-rhamnonate dehydratase.